The sequence spans 372 residues: Probable NADH-dependent flavin oxidoreductase YqiG (372 aa).

It belongs to the NADH:flavin oxidoreductase/NADH oxidase family.

This chain is Probable NADH-dependent flavin oxidoreductase YqiG (yqiG), found in Bacillus subtilis (strain 168).